Reading from the N-terminus, the 346-residue chain is Cyclin-dependent kinase 20 (346 aa).

Positions 4–288 constitute a Protein kinase domain; the sequence is YCILGRIGEG…ASQALLHQYF (285 aa). ATP contacts are provided by residues 10 to 18 and lysine 33; that span reads IGEGAHGIV. Catalysis depends on aspartate 127, which acts as the Proton acceptor. Positions 298 to 324 are disordered; the sequence is SELPIPQRPGGPAPKAHPGPPHVHDFH. The span at 303-318 shows a compositional bias: pro residues; the sequence is PQRPGGPAPKAHPGPP.

This sequence belongs to the protein kinase superfamily. CMGC Ser/Thr protein kinase family. CDC2/CDKX subfamily. As to quaternary structure, monomer. Interacts with MAK. Interacts with TBC1D32.

It is found in the nucleus. It localises to the cytoplasm. The protein resides in the cell projection. The protein localises to the cilium. The enzyme catalyses L-seryl-[protein] + ATP = O-phospho-L-seryl-[protein] + ADP + H(+). It catalyses the reaction L-threonyl-[protein] + ATP = O-phospho-L-threonyl-[protein] + ADP + H(+). Functionally, involved in cell growth. Activates CDK2, a kinase involved in the control of the cell cycle, by phosphorylating residue 'Thr-160'. Required for high-level Shh responses in the developing neural tube. Together with TBC1D32, controls the structure of the primary cilium by coordinating assembly of the ciliary membrane and axoneme, allowing GLI2 to be properly activated in response to SHH signaling. In Mus musculus (Mouse), this protein is Cyclin-dependent kinase 20 (Cdk20).